Reading from the N-terminus, the 268-residue chain is Type III pantothenate kinase 1 (268 aa).

6–13 (DIGNTNIT) serves as a coordination point for ATP. Substrate contacts are provided by residues Tyr100 and 107–110 (GTDR). Residue Asp109 is the Proton acceptor of the active site. Residue Asp133 coordinates K(+). Residue Thr136 participates in ATP binding.

This sequence belongs to the type III pantothenate kinase family. As to quaternary structure, homodimer. The cofactor is NH4(+). K(+) is required as a cofactor.

It is found in the cytoplasm. The catalysed reaction is (R)-pantothenate + ATP = (R)-4'-phosphopantothenate + ADP + H(+). Its pathway is cofactor biosynthesis; coenzyme A biosynthesis; CoA from (R)-pantothenate: step 1/5. Functionally, catalyzes the phosphorylation of pantothenate (Pan), the first step in CoA biosynthesis. The polypeptide is Type III pantothenate kinase 1 (Symbiobacterium thermophilum (strain DSM 24528 / JCM 14929 / IAM 14863 / T)).